A 1098-amino-acid polypeptide reads, in one-letter code: Gramicidin S synthase 1 (1098 aa).

The region spanning 538–612 is the Carrier domain; that stretch reads APRNEIEETL…QLVHYIKDSK (75 aa). Ser-573 is subject to O-(pantetheine 4'-phosphoryl)serine.

Belongs to the ATP-dependent AMP-binding enzyme family. As to quaternary structure, large multienzyme complex of GrsA and GrsB. Requires pantetheine 4'-phosphate as cofactor.

The enzyme catalyses L-phenylalanine + ATP + H2O = D-phenylalanine + AMP + diphosphate + H(+). The protein operates within antibiotic biosynthesis; gramicidin S biosynthesis. Functionally, in the first step of peptide synthesis this enzyme activates phenylalanine and racemizes it to the D-isomer. This chain is Gramicidin S synthase 1 (grsA), found in Brevibacillus brevis (Bacillus brevis).